The chain runs to 612 residues: Putative zinc metalloproteinase C607.06c (612 aa).

Histidine 303 contributes to the Zn(2+) binding site. Residue glutamate 304 is part of the active site. Positions 307 and 313 each coordinate Zn(2+). Residues 477 to 612 (VYRSERYGLR…FMDSIGFFIK (136 aa)) form the Jacalin-type lectin domain.

The protein belongs to the peptidase M10B family. Zn(2+) is required as a cofactor.

This chain is Putative zinc metalloproteinase C607.06c, found in Schizosaccharomyces pombe (strain 972 / ATCC 24843) (Fission yeast).